A 277-amino-acid polypeptide reads, in one-letter code: Putative phosphoenolpyruvate synthase regulatory protein (277 aa).

157-164 is an ADP binding site; that stretch reads GVSRCGKT.

Belongs to the pyruvate, phosphate/water dikinase regulatory protein family. PSRP subfamily.

It carries out the reaction [pyruvate, water dikinase] + ADP = [pyruvate, water dikinase]-phosphate + AMP + H(+). It catalyses the reaction [pyruvate, water dikinase]-phosphate + phosphate + H(+) = [pyruvate, water dikinase] + diphosphate. In terms of biological role, bifunctional serine/threonine kinase and phosphorylase involved in the regulation of the phosphoenolpyruvate synthase (PEPS) by catalyzing its phosphorylation/dephosphorylation. This chain is Putative phosphoenolpyruvate synthase regulatory protein, found in Klebsiella pneumoniae subsp. pneumoniae (strain ATCC 700721 / MGH 78578).